The chain runs to 297 residues: Phosphoribosylaminoimidazole-succinocarboxamide synthase (297 aa).

It belongs to the SAICAR synthetase family.

It catalyses the reaction 5-amino-1-(5-phospho-D-ribosyl)imidazole-4-carboxylate + L-aspartate + ATP = (2S)-2-[5-amino-1-(5-phospho-beta-D-ribosyl)imidazole-4-carboxamido]succinate + ADP + phosphate + 2 H(+). Its pathway is purine metabolism; IMP biosynthesis via de novo pathway; 5-amino-1-(5-phospho-D-ribosyl)imidazole-4-carboxamide from 5-amino-1-(5-phospho-D-ribosyl)imidazole-4-carboxylate: step 1/2. The protein is Phosphoribosylaminoimidazole-succinocarboxamide synthase of Corynebacterium urealyticum (strain ATCC 43042 / DSM 7109).